A 227-amino-acid polypeptide reads, in one-letter code: Protein PhlB (227 aa).

The N-terminal stretch at 1 to 35 is a signal peptide; the sequence is MPEGRRLRRALAIALLALVAVTGLLMMAKEQQMGQ. ANK repeat units follow at residues 75–104, 108–137, 142–171, and 175–204; these read RQVT…DPAA, DGNS…QMNV, TGAT…DTTL, and LGDT…MPGR.

Its function is as follows. Cell-protective protein that neutralizes the intracellular lysis capacity of phospholipase A1 through a direct interaction with the enzyme. The protein is Protein PhlB (phlB) of Serratia liquefaciens.